Reading from the N-terminus, the 213-residue chain is 3-demethoxyubiquinol 3-hydroxylase (213 aa).

Residues Glu62, Glu92, His95, Glu144, Glu176, and His179 each contribute to the Fe cation site.

This sequence belongs to the COQ7 family. The cofactor is Fe cation.

The protein resides in the cell membrane. The catalysed reaction is a 5-methoxy-2-methyl-3-(all-trans-polyprenyl)benzene-1,4-diol + AH2 + O2 = a 3-demethylubiquinol + A + H2O. Its pathway is cofactor biosynthesis; ubiquinone biosynthesis. Its function is as follows. Catalyzes the hydroxylation of 2-nonaprenyl-3-methyl-6-methoxy-1,4-benzoquinol during ubiquinone biosynthesis. This Chromohalobacter salexigens (strain ATCC BAA-138 / DSM 3043 / CIP 106854 / NCIMB 13768 / 1H11) protein is 3-demethoxyubiquinol 3-hydroxylase.